Here is a 428-residue protein sequence, read N- to C-terminus: tRNA modification GTPase MnmE (428 aa).

(6S)-5-formyl-5,6,7,8-tetrahydrofolate contacts are provided by R20, E77, and K117. Positions 213–351 (GFEIALVGAP…LLEKIRSVFS (139 aa)) constitute a TrmE-type G domain. Position 223 (N223) interacts with K(+). GTP contacts are provided by residues 223 to 228 (NAGKST), 242 to 248 (SEIAGTT), and 267 to 270 (DTAG). Residue S227 coordinates Mg(2+). K(+) is bound by residues S242, I244, and T247. T248 lines the Mg(2+) pocket. K428 provides a ligand contact to (6S)-5-formyl-5,6,7,8-tetrahydrofolate.

The protein belongs to the TRAFAC class TrmE-Era-EngA-EngB-Septin-like GTPase superfamily. TrmE GTPase family. Homodimer. Heterotetramer of two MnmE and two MnmG subunits. Requires K(+) as cofactor.

The protein resides in the cytoplasm. Exhibits a very high intrinsic GTPase hydrolysis rate. Involved in the addition of a carboxymethylaminomethyl (cmnm) group at the wobble position (U34) of certain tRNAs, forming tRNA-cmnm(5)s(2)U34. The sequence is that of tRNA modification GTPase MnmE from Roseobacter denitrificans (strain ATCC 33942 / OCh 114) (Erythrobacter sp. (strain OCh 114)).